The sequence spans 331 residues: Malate dehydrogenase (331 aa).

14–20 (GAAGSIG) provides a ligand contact to NAD(+). Substrate is bound by residues arginine 95 and arginine 101. NAD(+) contacts are provided by residues asparagine 108, glutamine 115, and 132 to 134 (VGN). Residues asparagine 134 and arginine 165 each coordinate substrate. Catalysis depends on histidine 190, which acts as the Proton acceptor.

Belongs to the LDH/MDH superfamily. MDH type 2 family.

The catalysed reaction is (S)-malate + NAD(+) = oxaloacetate + NADH + H(+). Functionally, catalyzes the reversible oxidation of malate to oxaloacetate. The polypeptide is Malate dehydrogenase (Rhodococcus jostii (strain RHA1)).